The following is a 398-amino-acid chain: Acetate kinase (398 aa).

Position 10 (asparagine 10) interacts with Mg(2+). Lysine 17 is an ATP binding site. Arginine 91 contacts substrate. Aspartate 148 acts as the Proton donor/acceptor in catalysis. ATP-binding positions include 208–212 (HLGNG), 283–285 (DCR), and 331–335 (GIGEN). Residue glutamate 385 coordinates Mg(2+).

This sequence belongs to the acetokinase family. As to quaternary structure, homodimer. Requires Mg(2+) as cofactor. Mn(2+) is required as a cofactor.

It is found in the cytoplasm. It catalyses the reaction acetate + ATP = acetyl phosphate + ADP. The protein operates within metabolic intermediate biosynthesis; acetyl-CoA biosynthesis; acetyl-CoA from acetate: step 1/2. Functionally, catalyzes the formation of acetyl phosphate from acetate and ATP. Can also catalyze the reverse reaction. This is Acetate kinase from Shewanella woodyi (strain ATCC 51908 / MS32).